A 315-amino-acid polypeptide reads, in one-letter code: Probable cell division protein WhiA (315 aa).

Positions 278-312 (SLSDLAGMIEGQELTKSGINHRMRKLMQIVKELNH) form a DNA-binding region, H-T-H motif.

This sequence belongs to the WhiA family.

Involved in cell division and chromosome segregation. This is Probable cell division protein WhiA from Oenococcus oeni (strain ATCC BAA-331 / PSU-1).